Consider the following 247-residue polypeptide: uncharacterized protein (247 aa).

Positions 11–85 constitute an HTH merR-type domain; sequence GMSIGAVLDL…LKVIRAQLDA (75 aa). Positions 14–38 form a DNA-binding region, H-T-H motif; the sequence is IGAVLDLLRPDFPDVTISKIRFLEA.

Homodimer.

In terms of biological role, transcriptional regulator that binds to its own promoter and thus may play a role in the regulation of the cotranscribed genes Rv1827 and Rv1828. Can also bind several promoter regions of genes that are essential, including ftsZ. Binds to the imperfect everted repeat sequence CTCAA through its winged-HTH motif. This is an uncharacterized protein from Mycobacterium tuberculosis (strain ATCC 25618 / H37Rv).